The chain runs to 343 residues: Ribosomal RNA small subunit methyltransferase C (343 aa).

The protein belongs to the methyltransferase superfamily. RsmC family. In terms of assembly, monomer.

Its subcellular location is the cytoplasm. The enzyme catalyses guanosine(1207) in 16S rRNA + S-adenosyl-L-methionine = N(2)-methylguanosine(1207) in 16S rRNA + S-adenosyl-L-homocysteine + H(+). In terms of biological role, specifically methylates the guanine in position 1207 of 16S rRNA in the 30S particle. The chain is Ribosomal RNA small subunit methyltransferase C from Escherichia coli O7:K1 (strain IAI39 / ExPEC).